The following is a 355-amino-acid chain: UDP-N-acetylglucosamine--N-acetylmuramyl-(pentapeptide) pyrophosphoryl-undecaprenol N-acetylglucosamine transferase (355 aa).

UDP-N-acetyl-alpha-D-glucosamine is bound by residues 15 to 17, asparagine 127, arginine 163, serine 191, isoleucine 244, 263 to 268, and glutamine 288; these read TGG and ALTVSE.

This sequence belongs to the glycosyltransferase 28 family. MurG subfamily.

The protein resides in the cell inner membrane. It carries out the reaction di-trans,octa-cis-undecaprenyl diphospho-N-acetyl-alpha-D-muramoyl-L-alanyl-D-glutamyl-meso-2,6-diaminopimeloyl-D-alanyl-D-alanine + UDP-N-acetyl-alpha-D-glucosamine = di-trans,octa-cis-undecaprenyl diphospho-[N-acetyl-alpha-D-glucosaminyl-(1-&gt;4)]-N-acetyl-alpha-D-muramoyl-L-alanyl-D-glutamyl-meso-2,6-diaminopimeloyl-D-alanyl-D-alanine + UDP + H(+). Its pathway is cell wall biogenesis; peptidoglycan biosynthesis. Cell wall formation. Catalyzes the transfer of a GlcNAc subunit on undecaprenyl-pyrophosphoryl-MurNAc-pentapeptide (lipid intermediate I) to form undecaprenyl-pyrophosphoryl-MurNAc-(pentapeptide)GlcNAc (lipid intermediate II). This is UDP-N-acetylglucosamine--N-acetylmuramyl-(pentapeptide) pyrophosphoryl-undecaprenol N-acetylglucosamine transferase from Salmonella paratyphi B (strain ATCC BAA-1250 / SPB7).